A 275-amino-acid chain; its full sequence is Formamidopyrimidine-DNA glycosylase (275 aa).

Pro2 acts as the Schiff-base intermediate with DNA in catalysis. Residue Glu3 is the Proton donor of the active site. Lys58 serves as the catalytic Proton donor; for beta-elimination activity. DNA contacts are provided by His93, Arg111, and Arg156. The FPG-type zinc finger occupies 241–275 (FVYDRAGLPCRVCGTPIRQIVQGQRSTYFCPTCQR). Arg265 functions as the Proton donor; for delta-elimination activity in the catalytic mechanism.

This sequence belongs to the FPG family. Monomer. Zn(2+) serves as cofactor.

The enzyme catalyses Hydrolysis of DNA containing ring-opened 7-methylguanine residues, releasing 2,6-diamino-4-hydroxy-5-(N-methyl)formamidopyrimidine.. The catalysed reaction is 2'-deoxyribonucleotide-(2'-deoxyribose 5'-phosphate)-2'-deoxyribonucleotide-DNA = a 3'-end 2'-deoxyribonucleotide-(2,3-dehydro-2,3-deoxyribose 5'-phosphate)-DNA + a 5'-end 5'-phospho-2'-deoxyribonucleoside-DNA + H(+). Functionally, involved in base excision repair of DNA damaged by oxidation or by mutagenic agents. Acts as a DNA glycosylase that recognizes and removes damaged bases. Has a preference for oxidized purines, such as 7,8-dihydro-8-oxoguanine (8-oxoG). Has AP (apurinic/apyrimidinic) lyase activity and introduces nicks in the DNA strand. Cleaves the DNA backbone by beta-delta elimination to generate a single-strand break at the site of the removed base with both 3'- and 5'-phosphates. This Burkholderia ambifaria (strain MC40-6) protein is Formamidopyrimidine-DNA glycosylase.